The primary structure comprises 316 residues: Ribosomal RNA small subunit methyltransferase H (316 aa).

S-adenosyl-L-methionine-binding positions include 35–37 (AGH), Asp55, Phe84, Asp105, and Gln112.

It belongs to the methyltransferase superfamily. RsmH family.

It is found in the cytoplasm. It carries out the reaction cytidine(1402) in 16S rRNA + S-adenosyl-L-methionine = N(4)-methylcytidine(1402) in 16S rRNA + S-adenosyl-L-homocysteine + H(+). Specifically methylates the N4 position of cytidine in position 1402 (C1402) of 16S rRNA. This Streptococcus gordonii (strain Challis / ATCC 35105 / BCRC 15272 / CH1 / DL1 / V288) protein is Ribosomal RNA small subunit methyltransferase H.